A 379-amino-acid chain; its full sequence is Succinate--CoA ligase [ADP-forming] subunit beta (379 aa).

In terms of domain architecture, ATP-grasp spans 9–235 (KEIAKNNGIP…GRELSEMEAI (227 aa)). ATP contacts are provided by Lys-45, Glu-91, Ile-94, and Glu-99. Asn-191 and Asp-205 together coordinate Mg(2+). Substrate-binding positions include Asn-255 and 312 to 314 (GIT).

Belongs to the succinate/malate CoA ligase beta subunit family. Heterotetramer of two alpha and two beta subunits. It depends on Mg(2+) as a cofactor.

It catalyses the reaction succinate + ATP + CoA = succinyl-CoA + ADP + phosphate. The enzyme catalyses GTP + succinate + CoA = succinyl-CoA + GDP + phosphate. The protein operates within carbohydrate metabolism; tricarboxylic acid cycle; succinate from succinyl-CoA (ligase route): step 1/1. In terms of biological role, succinyl-CoA synthetase functions in the citric acid cycle (TCA), coupling the hydrolysis of succinyl-CoA to the synthesis of either ATP or GTP and thus represents the only step of substrate-level phosphorylation in the TCA. The beta subunit provides nucleotide specificity of the enzyme and binds the substrate succinate, while the binding sites for coenzyme A and phosphate are found in the alpha subunit. This Staphylothermus marinus (strain ATCC 43588 / DSM 3639 / JCM 9404 / F1) protein is Succinate--CoA ligase [ADP-forming] subunit beta.